Consider the following 89-residue polypeptide: MKKTTRSKYRQEFSGDHVFDYKDPASLTRFIGDGGKITPSRISKLSVAQQKRVAAAVKKSRNLALLPSGSDSYDTFHRAEAISPVPFEI.

The protein belongs to the bacterial ribosomal protein bS18 family. Part of the 30S ribosomal subunit. Forms a tight heterodimer with protein bS6.

Its function is as follows. Binds as a heterodimer with protein bS6 to the central domain of the 16S rRNA, where it helps stabilize the platform of the 30S subunit. The sequence is that of Small ribosomal subunit protein bS18 from Bdellovibrio bacteriovorus (strain ATCC 15356 / DSM 50701 / NCIMB 9529 / HD100).